The chain runs to 433 residues: UDP-N-acetylmuramoylalanine--D-glutamate ligase (433 aa).

Position 125–131 (125–131 (GTSGKTT)) interacts with ATP.

The protein belongs to the MurCDEF family.

It localises to the cytoplasm. The enzyme catalyses UDP-N-acetyl-alpha-D-muramoyl-L-alanine + D-glutamate + ATP = UDP-N-acetyl-alpha-D-muramoyl-L-alanyl-D-glutamate + ADP + phosphate + H(+). The protein operates within cell wall biogenesis; peptidoglycan biosynthesis. Functionally, cell wall formation. Catalyzes the addition of glutamate to the nucleotide precursor UDP-N-acetylmuramoyl-L-alanine (UMA). The chain is UDP-N-acetylmuramoylalanine--D-glutamate ligase from Nitratidesulfovibrio vulgaris (strain ATCC 29579 / DSM 644 / CCUG 34227 / NCIMB 8303 / VKM B-1760 / Hildenborough) (Desulfovibrio vulgaris).